The primary structure comprises 519 residues: Demethylepipodophyllotoxin synthase (519 aa).

The helical transmembrane segment at 6–26 (CLETLLLGFFVLLPCFFYFVW) threads the bilayer. Residue cysteine 458 participates in heme binding.

This sequence belongs to the cytochrome P450 family. Heme is required as a cofactor. As to expression, rhizome-specific expression.

The protein resides in the membrane. The enzyme catalyses (-)-4'-desmethyl-deoxypodophyllotoxin + reduced [NADPH--hemoprotein reductase] + O2 = 4'-demethylepipodophyllotoxin + oxidized [NADPH--hemoprotein reductase] + H2O + H(+). It functions in the pathway aromatic compound metabolism; phenylpropanoid biosynthesis. Cytochrome P450 involved in the biosynthesis of etoposide, a chemotherapeutic compound of the topoisomerase inhibitor family. Catalyzes the hydroxylation of deoxypodophyllotoxin to form epipodophyllotoxin. The chain is Demethylepipodophyllotoxin synthase from Sinopodophyllum hexandrum (Himalayan may apple).